The primary structure comprises 176 residues: NAD(P)H-quinone oxidoreductase subunit 6, chloroplastic (176 aa).

5 helical membrane passes run F10–T30, I33–A53, A61–I81, L92–I112, and F152–A172.

This sequence belongs to the complex I subunit 6 family. In terms of assembly, NDH is composed of at least 16 different subunits, 5 of which are encoded in the nucleus.

Its subcellular location is the plastid. The protein resides in the chloroplast thylakoid membrane. It catalyses the reaction a plastoquinone + NADH + (n+1) H(+)(in) = a plastoquinol + NAD(+) + n H(+)(out). It carries out the reaction a plastoquinone + NADPH + (n+1) H(+)(in) = a plastoquinol + NADP(+) + n H(+)(out). Functionally, NDH shuttles electrons from NAD(P)H:plastoquinone, via FMN and iron-sulfur (Fe-S) centers, to quinones in the photosynthetic chain and possibly in a chloroplast respiratory chain. The immediate electron acceptor for the enzyme in this species is believed to be plastoquinone. Couples the redox reaction to proton translocation, and thus conserves the redox energy in a proton gradient. The protein is NAD(P)H-quinone oxidoreductase subunit 6, chloroplastic (ndhG) of Fagopyrum esculentum subsp. ancestrale (Wild buckwheat).